Here is a 481-residue protein sequence, read N- to C-terminus: UDP-N-acetylmuramate--L-alanine ligase (481 aa).

Position 135–141 (135–141) interacts with ATP; the sequence is GTHGKTT.

This sequence belongs to the MurCDEF family.

Its subcellular location is the cytoplasm. The catalysed reaction is UDP-N-acetyl-alpha-D-muramate + L-alanine + ATP = UDP-N-acetyl-alpha-D-muramoyl-L-alanine + ADP + phosphate + H(+). The protein operates within cell wall biogenesis; peptidoglycan biosynthesis. Its function is as follows. Cell wall formation. The polypeptide is UDP-N-acetylmuramate--L-alanine ligase (Nostoc punctiforme (strain ATCC 29133 / PCC 73102)).